Consider the following 504-residue polypeptide: ATP synthase subunit alpha (504 aa).

Residue 170–177 (GDRQTGKT) coordinates ATP.

This sequence belongs to the ATPase alpha/beta chains family. As to quaternary structure, F-type ATPases have 2 components, CF(1) - the catalytic core - and CF(0) - the membrane proton channel. CF(1) has five subunits: alpha(3), beta(3), gamma(1), delta(1), epsilon(1). CF(0) has four main subunits: a(1), b(1), b'(1) and c(9-12).

The protein resides in the cellular thylakoid membrane. The catalysed reaction is ATP + H2O + 4 H(+)(in) = ADP + phosphate + 5 H(+)(out). Its function is as follows. Produces ATP from ADP in the presence of a proton gradient across the membrane. The alpha chain is a regulatory subunit. The chain is ATP synthase subunit alpha from Prochlorococcus marinus (strain NATL2A).